Here is a 377-residue protein sequence, read N- to C-terminus: Deoxyribonuclease CdiA-o11 (377 aa).

The VENN CT cleavage motif signature appears at Val81–Asn84. An inner membrane translocation domain (IMTD), targets to YciB region spans residues Tyr85 to Thr233. The interval Thr88–Lys377 is CT domain, sufficient to interact with CdiI. Positions Ala222–Lys377 are has DNase activity in vivo, cannot be expressed in the absence of CdiI. Active-site residues include Glu257, Asp278, Ser289, and Lys291. Residues Glu257 and Asp278 each coordinate Zn(2+).

Interacts with cognate immunity protein CdiI-o11-EC869, which blocks its toxic DNase activity. Requires Zn(2+) as cofactor.

Its subcellular location is the target cell. It localises to the target cell cytoplasm. Toxic component of a toxin-immunity protein module, which functions as a cellular contact-dependent growth inhibition (CDI) system. CDI modules allow bacteria to communicate with and inhibit the growth of closely related neighboring bacteria in a contact-dependent fashion. The C-terminal 289 residues (the CT fragment) has a strong DNase activity in the presence of Zn(2+), completely degrading supercoiled and linear plasmids, and inhibits growth. In the presence of Mg(2+) it nicks dsDNA. Toxic activity is neutralized by coexpression of the cognate immunity protein CdiI-o11-EC869, but not by non-cognate immunity proteins from other toxin-immunity modules or other strains of E.coli. Gains access to the cytoplasm of target cells by using integral inner membrane protein YciB. Functionally, expression of this locus confers protection against other bacteria carrying the locus. In Escherichia coli O157:H7 (strain EC869), this protein is Deoxyribonuclease CdiA-o11 (cdiA4).